The following is a 90-amino-acid chain: Evasin P458 (90 aa).

The first 24 residues, 1–24 (MEVKTFAFLQIAVLIAFSLHSASA), serve as a signal peptide directing secretion. 3 disulfide bridges follow: cysteine 44/cysteine 63, cysteine 48/cysteine 65, and cysteine 59/cysteine 76. An N-linked (GlcNAc...) asparagine glycan is attached at asparagine 47.

The protein localises to the secreted. Its function is as follows. Salivary chemokine-binding protein which binds to host chemokines CXCL1, CXCL2, CXCL3, CXCL5, CXCL6 and CXCL13. The chain is Evasin P458 from Ixodes ricinus (Common tick).